Here is a 136-residue protein sequence, read N- to C-terminus: Large ribosomal subunit protein uL16 (136 aa).

This sequence belongs to the universal ribosomal protein uL16 family. Part of the 50S ribosomal subunit.

In terms of biological role, binds 23S rRNA and is also seen to make contacts with the A and possibly P site tRNAs. This Rickettsia akari (strain Hartford) protein is Large ribosomal subunit protein uL16.